Reading from the N-terminus, the 150-residue chain is Snaclec CTL-Eoc125 (150 aa).

An N-terminal signal peptide occupies residues Met1–Ala23. 3 cysteine pairs are disulfide-bonded: Cys27-Cys38, Cys55-Cys144, and Cys121-Cys136. The region spanning Tyr34 to Lys145 is the C-type lectin domain.

Belongs to the snaclec family. Heterodimer; disulfide-linked. Expressed by the venom gland.

It localises to the secreted. Functionally, interferes with one step of hemostasis (modulation of platelet aggregation, or coagulation cascade, for example). The chain is Snaclec CTL-Eoc125 from Echis ocellatus (Ocellated saw-scaled viper).